The sequence spans 361 residues: DNA replication and repair protein RecF (361 aa).

30–37 (GDNAQGKT) contributes to the ATP binding site.

The protein belongs to the RecF family.

The protein localises to the cytoplasm. Functionally, the RecF protein is involved in DNA metabolism; it is required for DNA replication and normal SOS inducibility. RecF binds preferentially to single-stranded, linear DNA. It also seems to bind ATP. This chain is DNA replication and repair protein RecF, found in Clostridium perfringens (strain ATCC 13124 / DSM 756 / JCM 1290 / NCIMB 6125 / NCTC 8237 / Type A).